The chain runs to 847 residues: Collagen alpha-1(I) chain (847 aa).

The disordered stretch occupies residues 1 to 847 (GPMGPSGPRG…PGPIGPPGPR (847 aa)). The segment covering 20 to 39 (PQGFQGPPGEPGEPGSSGPM) has biased composition (low complexity). Residues 51 to 65 (NGDDGEAGKPGRPGE) show a composition bias toward basic and acidic residues. A Phosphoserine modification is found at Ser85. Composition is skewed to low complexity over residues 93–109 (DAGP…PGEN) and 127–145 (PGAS…TGAA). Positions 147–159 (PPGPTGPAGPPGF) are enriched in pro residues. Low complexity-rich tracts occupy residues 193 to 208 (AGAA…DGQP), 219 to 228 (QGPSGAPGPK), 298 to 314 (PKGI…DGKT), 334 to 343 (PGPKGAAGEP), 500 to 543 (PSGP…KGDA), 551 to 599 (PTGA…NAGA), and 628 to 638 (SPGADGPAGAP). Ser501 carries the post-translational modification Phosphoserine. Positions 685-695 (PPGPMGPPGIA) are enriched in pro residues. Positions 697–712 (PPGESGREGSPGAEGS) are enriched in low complexity. Positions 731 to 746 (SGPPGAPGAPGAPGPV) are enriched in pro residues. The segment covering 763–777 (AGPAGARGPSGPQGP) has biased composition (low complexity). Residues 778–789 (RGDKGETGEQGD) are compositionally biased toward basic and acidic residues. Residues 793-838 (SGIQGPPGAPGSPGEQGPSGASGPAGPRGPPGSAGSPGKDGINGIP) show a composition bias toward low complexity.

It belongs to the fibrillar collagen family. Trimers of one alpha 2(I) and two alpha 1(I) chains. Prolines at the third position of the tripeptide repeating unit (G-X-Y) are hydroxylated in some or all of the chains. Forms the fibrils of tendon, ligaments and bones. In bones, the fibrils are mineralized with calcium hydroxyapatite.

It is found in the secreted. The protein localises to the extracellular space. Its subcellular location is the extracellular matrix. Functionally, type I collagen is a member of group I collagen (fibrillar forming collagen). The chain is Collagen alpha-1(I) chain from Cyclopes didactylus (Silky anteater).